Here is a 189-residue protein sequence, read N- to C-terminus: dTTP/UTP pyrophosphatase (189 aa).

Aspartate 71 serves as the catalytic Proton acceptor.

It belongs to the Maf family. YhdE subfamily. A divalent metal cation serves as cofactor.

The protein resides in the cytoplasm. The catalysed reaction is dTTP + H2O = dTMP + diphosphate + H(+). The enzyme catalyses UTP + H2O = UMP + diphosphate + H(+). Its function is as follows. Nucleoside triphosphate pyrophosphatase that hydrolyzes dTTP and UTP. May have a dual role in cell division arrest and in preventing the incorporation of modified nucleotides into cellular nucleic acids. This Pseudoalteromonas translucida (strain TAC 125) protein is dTTP/UTP pyrophosphatase.